The primary structure comprises 627 residues: (+)-3-carene synthase 1, chloroplastic (627 aa).

The N-terminal 36 residues, 1-36, are a transit peptide targeting the chloroplast; sequence MSVISIVPLASKPCLYKSFISSTHEPKALRRPISTV. Asp378, Asp382, and Asp530 together coordinate Mg(2+). The DDXXD motif motif lies at 378 to 382; that stretch reads DDMYD.

It belongs to the terpene synthase family. Tpsd subfamily. Mg(2+) serves as cofactor. Requires Mn(2+) as cofactor.

The protein resides in the plastid. It is found in the chloroplast. It carries out the reaction (2E)-geranyl diphosphate = (+)-car-3-ene + diphosphate. Its pathway is terpene metabolism; oleoresin biosynthesis. Functionally, terpene synthase (TPS) involved in the biosynthesis of monoterpene natural products included in conifer oleoresin secretions and volatile emissions; these compounds contribute to biotic and abiotic stress defense against herbivores (e.g. insect attack by white pine weevil P.strobi) and pathogens. Catalyzes the conversion of (2E)-geranyl diphosphate (GPP) to (+)-car-3-ene. The chain is (+)-3-carene synthase 1, chloroplastic from Picea sitchensis (Sitka spruce).